A 231-amino-acid polypeptide reads, in one-letter code: Ureidoacrylate amidohydrolase RutB (231 aa).

D25 serves as the catalytic Proton acceptor. Residue K134 is part of the active site. C167 (nucleophile) is an active-site residue.

The protein belongs to the isochorismatase family. RutB subfamily.

The enzyme catalyses (Z)-3-ureidoacrylate + H2O + H(+) = (Z)-3-aminoacrylate + NH4(+) + CO2. It carries out the reaction (Z)-3-ureidoacrylate + H2O = (Z)-3-aminoacrylate + carbamate + H(+). It catalyses the reaction (Z)-2-methylureidoacrylate + H2O + H(+) = (Z)-2-methylaminoacrylate + NH4(+) + CO2. Its function is as follows. Hydrolyzes ureidoacrylate to form aminoacrylate and carbamate. The carbamate hydrolyzes spontaneously, thereby releasing one of the nitrogen atoms of the pyrimidine ring as ammonia and one of its carbon atoms as CO2. In Escherichia coli O139:H28 (strain E24377A / ETEC), this protein is Ureidoacrylate amidohydrolase RutB.